Here is a 140-residue protein sequence, read N- to C-terminus: Holo-[acyl-carrier-protein] synthase (140 aa).

Mg(2+) is bound by residues Asp8 and Glu62.

The protein belongs to the P-Pant transferase superfamily. AcpS family. It depends on Mg(2+) as a cofactor.

The protein resides in the cytoplasm. It catalyses the reaction apo-[ACP] + CoA = holo-[ACP] + adenosine 3',5'-bisphosphate + H(+). In terms of biological role, transfers the 4'-phosphopantetheine moiety from coenzyme A to a Ser of acyl-carrier-protein. This chain is Holo-[acyl-carrier-protein] synthase, found in Cupriavidus necator (strain ATCC 17699 / DSM 428 / KCTC 22496 / NCIMB 10442 / H16 / Stanier 337) (Ralstonia eutropha).